A 507-amino-acid chain; its full sequence is Microcystinase C (507 aa).

A signal peptide spans 1-21 (MLDRRTLMGGILSMAGSKATG). 3 residues coordinate Zn(2+): D167, H169, and H191.

Belongs to the peptidase M81 family. Zn(2+) serves as cofactor.

With respect to regulation, inhibited by the metal chelators EDTA and 1,10-phenanthroline. In terms of biological role, involved in peptidolytic degradation of cyclic heptapeptide hepatotoxin microcystin (MC). Cleaves both linear MC and the tetrapeptide degradation product of MC. Cleaves the Adda-Glu peptide bond of linear MC heptapeptides. The chain is Microcystinase C from Sphingomonas sp.